The chain runs to 1771 residues: Gag-Pro-Pol polyprotein (1771 aa).

Residue Gly-2 is the site of N-myristoyl glycine; by host attachment. The propeptide occupies Ala-101 to Leu-161. Composition is skewed to polar residues over residues Asn-113–Pro-125 and Lys-140–Thr-152. A disordered region spans residues Asn-113–Val-178. The short motif at Pro-202–Tyr-205 is the PPXY motif element. The short motif at Pro-210–Pro-213 is the PTAP/PSAP motif element. Residues Met-216 to Glu-257 adopt a coiled-coil conformation. Positions Thr-260–Ile-279 are disordered. The PTAP/PSAP motif motif lies at Ala-335–Pro-338. 2 consecutive CCHC-type zinc fingers follow at residues Gly-547–Glu-564 and Gly-576–Ser-593. The segment at Lys-592–Leu-626 is disordered. Positions Phe-780–Leu-856 constitute a Peptidase A2 domain. Asp-785 serves as the catalytic Protease; shared with dimeric partner. In terms of domain architecture, G-patch spans Pro-867 to Thr-913. The Reverse transcriptase domain occupies Leu-959–Leu-1147. The Mg(2+) site is built by Asp-1024, Asp-1099, Asp-1100, Asp-1370, Glu-1399, Asp-1420, and Asp-1484. In terms of domain architecture, RNase H type-1 spans Leu-1361 to Ser-1492. The segment at Thr-1496 to Val-1537 adopts an Integrase-type zinc-finger fold. 4 residues coordinate Zn(2+): His-1505, His-1509, Cys-1533, and Cys-1536. The Integrase catalytic domain occupies Arg-1550–Lys-1719. Residues Asp-1561, Asp-1618, and Glu-1654 each coordinate Mg(2+). Residues Ala-1716 to Asn-1765 constitute a DNA-binding region (integrase-type).

Belongs to the retroviral Pol polyprotein family. As to quaternary structure, homodimer. Interacts with the G-patch peptide. In terms of assembly, interacts with the reverse transcriptase/ribonuclease H. As to quaternary structure, homotrimer. The cofactor is Mg(2+). Released by autocatalytic processing. The protease can undergo further autoprocessing to yield 2 shorter but enzymatically active forms of 12 kDa and 13 kDa. In terms of processing, myristoylated. Myristoylation of the matrix (MA) domain mediates the transport and binding of Gag polyproteins to the host plasma membrane and is required for the assembly of viral particles. Post-translationally, specific enzymatic cleavages in vivo yield mature proteins.

It is found in the virion. The enzyme catalyses DNA(n) + a 2'-deoxyribonucleoside 5'-triphosphate = DNA(n+1) + diphosphate. The catalysed reaction is Endonucleolytic cleavage to 5'-phosphomonoester.. It catalyses the reaction dUTP + H2O = dUMP + diphosphate + H(+). Its function is as follows. Matrix protein. Functionally, nucleocapsid protein p14: Nucleocapsid protein. In terms of biological role, capsid protein. The aspartyl protease mediates proteolytic cleavages of Gag and Gag-Pol polyproteins during or shortly after the release of the virion from the plasma membrane. Cleavages take place as an ordered, step-wise cascade to yield mature proteins. This process is called maturation. Displays maximal activity during the budding process just prior to particle release from the cell. Its function is as follows. Enhances the activity of the reverse transcriptase. May be part of the mature RT. Functionally, RT is a multifunctional enzyme that converts the viral dimeric RNA genome into dsDNA in the cytoplasm, shortly after virus entry into the cell. This enzyme displays a DNA polymerase activity that can copy either DNA or RNA templates, and a ribonuclease H (RNase H) activity that cleaves the RNA strand of RNA-DNA heteroduplexes in a partially processive 3' to 5' endonucleasic mode. Conversion of viral genomic RNA into dsDNA requires many steps. A tRNA binds to the primer-binding site (PBS) situated at the 5' end of the viral RNA. RT uses the 3' end of the tRNA primer to perfom a short round of RNA-dependent minus-strand DNA synthesis. The reading proceeds through the U5 region and ends after the repeated (R) region which is present at both ends of viral RNA. The portion of the RNA-DNA heteroduplex is digested by the RNase H, resulting in a ssDNA product attached to the tRNA primer. This ssDNA/tRNA hybridizes with the identical R region situated at the 3' end of viral RNA. This template exchange, known as minus-strand DNA strong stop transfer, can be either intra- or intermolecular. RT uses the 3' end of this newly synthesized short ssDNA to perfom the RNA-dependent minus-strand DNA synthesis of the whole template. RNase H digests the RNA template except for a polypurine tract (PPT) situated at the 5' end of the genome. It is not clear if both polymerase and RNase H activities are simultaneous. RNase H probably can proceed both in a polymerase-dependent (RNA cut into small fragments by the same RT performing DNA synthesis) and a polymerase-independent mode (cleavage of remaining RNA fragments by free RTs). Secondly, RT performs DNA-directed plus-strand DNA synthesis using the PPT that has not been removed by RNase H as primers. PPT and tRNA primers are then removed by RNase H. The 3' and 5' ssDNA PBS regions hybridize to form a circular dsDNA intermediate. Strand displacement synthesis by RT to the PBS and PPT ends produces a blunt ended, linear dsDNA copy of the viral genome that includes long terminal repeats (LTRs) at both ends. In terms of biological role, catalyzes viral DNA integration into the host chromosome, by performing a series of DNA cutting and joining reactions. The protein is Gag-Pro-Pol polyprotein (gag-pro-pol) of Macaca mulatta (Rhesus macaque).